The chain runs to 604 residues: Elongation factor 4 (604 aa).

One can recognise a tr-type G domain in the interval 7-189 (SRLRNFCIIA…AVVDRIPPPA (183 aa)). GTP-binding positions include 19–24 (DHGKST) and 136–139 (NKID).

It belongs to the TRAFAC class translation factor GTPase superfamily. Classic translation factor GTPase family. LepA subfamily.

The protein localises to the cell inner membrane. It carries out the reaction GTP + H2O = GDP + phosphate + H(+). Functionally, required for accurate and efficient protein synthesis under certain stress conditions. May act as a fidelity factor of the translation reaction, by catalyzing a one-codon backward translocation of tRNAs on improperly translocated ribosomes. Back-translocation proceeds from a post-translocation (POST) complex to a pre-translocation (PRE) complex, thus giving elongation factor G a second chance to translocate the tRNAs correctly. Binds to ribosomes in a GTP-dependent manner. In Prochlorococcus marinus (strain MIT 9303), this protein is Elongation factor 4.